A 396-amino-acid chain; its full sequence is Probable protein phosphatase 2C 25 (396 aa).

Residues 32–98 (ESLSLTLSHR…SPPGGVLKRK (67 aa)) are disordered. Residues 44–61 (QTSSPSSPSTTVSSPKSP) show a composition bias toward low complexity. The PPM-type phosphatase domain maps to 139–392 (GYSVYCKRGR…DDISVMLIPL (254 aa)). The Mn(2+) site is built by aspartate 175, glycine 176, aspartate 338, and aspartate 383.

The protein belongs to the PP2C family. As to quaternary structure, interacts with MPK4 and MPK6. It depends on Mg(2+) as a cofactor. Mn(2+) serves as cofactor.

The protein resides in the cytoplasm. It localises to the nucleus. The catalysed reaction is O-phospho-L-seryl-[protein] + H2O = L-seryl-[protein] + phosphate. It carries out the reaction O-phospho-L-threonyl-[protein] + H2O = L-threonyl-[protein] + phosphate. Functionally, protein phosphatase that negatively regulates defense respones. Inactivates MPK4 and MPK6 MAP kinases involved in stress and defense signaling. This chain is Probable protein phosphatase 2C 25, found in Arabidopsis thaliana (Mouse-ear cress).